The sequence spans 92 residues: Small ribosomal subunit protein uS19 (92 aa).

Residues 72–92 form a disordered region; it reads GEFSPTRTYTGHGSDKKSKRG.

It belongs to the universal ribosomal protein uS19 family.

Its function is as follows. Protein S19 forms a complex with S13 that binds strongly to the 16S ribosomal RNA. This chain is Small ribosomal subunit protein uS19, found in Gluconobacter oxydans (strain 621H) (Gluconobacter suboxydans).